The following is a 1256-amino-acid chain: Octopamine receptor beta-3R (1256 aa).

Over Met1–Gly143 the chain is Extracellular. Residues Asn36, Asn113, and Asn117 are each glycosylated (N-linked (GlcNAc...) asparagine). A helical transmembrane segment spans residues Phe144 to Val164. Residues Gln165–Arg171 lie on the Cytoplasmic side of the membrane. A helical membrane pass occupies residues Val172–Ala192. Over Met193–Cys213 the chain is Extracellular. Residue Asn196 is glycosylated (N-linked (GlcNAc...) asparagine). Residues Asn214–Val236 traverse the membrane as a helical segment. The Cytoplasmic segment spans residues Asp237 to Cys258. The helical transmembrane segment at Phe259–Gly279 threads the bilayer. Over Trp280–Tyr305 the chain is Extracellular. The chain crosses the membrane as a helical span at residues Ala306–Trp326. Residues Arg327 to Thr1169 lie on the Cytoplasmic side of the membrane. Disordered regions lie at residues Ala377–Asp427, Glu480–Ala512, Leu665–Asp698, Gly751–Gly774, and Asp1087–Arg1117. A compositionally biased stretch (acidic residues) spans Thr396–Asp406. Residues Asn489–Thr498 are compositionally biased toward polar residues. The segment covering Pro757–Pro770 has biased composition (pro residues). A helical transmembrane segment spans residues Leu1170 to Ile1190. Over Thr1191–Asp1202 the chain is Extracellular. Residues Val1203 to Tyr1223 form a helical membrane-spanning segment. Topologically, residues Ala1224–Val1256 are cytoplasmic.

This sequence belongs to the G-protein coupled receptor 1 family. As to expression, in the adult, expressed in the inferior and superior protocerebrum, the posterior lateral protocerebrum, the deutocerebrum, the surface of the subesophageal ganglion, the lateral cell body region, the cortical layer of the ventral nerve cord and the optic lobe medulla of the central nervous system (CNS). Also expressed in the nurse cells and follicle cells of the egg chambers in the ovary at oogenic stages 1-10, and spermatogonia and spermatocytes in the testis. Expressed ubiquitously in the embryonic CNS. In larvae, expressed in the ventral cortical layer of the ventral nerve cord, the cortical layer of the brain lobes, salivary glands, midgut, imaginal disks and developing reproductive organs. Expressed in the larval prothoracic gland with weak expression in other regions of the ring gland.

The protein localises to the cell membrane. Its function is as follows. Autoreceptor for octopamine, which is a neurotransmitter, neurohormone, and neuromodulator in invertebrates. Probably also acts as a receptor for tyramine during ecdysone biosynthesis. Required for the biosynthesis of the steroid hormone ecdysone which is necessary for metamorphosis. Involved in activation of prothoracicotropic hormone and insulin-like peptide signaling which is required for the expression of ecdysone biosynthetic genes. The protein is Octopamine receptor beta-3R of Drosophila melanogaster (Fruit fly).